Here is a 130-residue protein sequence, read N- to C-terminus: Small ribosomal subunit protein uS8 (130 aa).

Belongs to the universal ribosomal protein uS8 family. In terms of assembly, part of the 30S ribosomal subunit. Contacts proteins S5 and S12.

One of the primary rRNA binding proteins, it binds directly to 16S rRNA central domain where it helps coordinate assembly of the platform of the 30S subunit. In Sodalis glossinidius (strain morsitans), this protein is Small ribosomal subunit protein uS8.